We begin with the raw amino-acid sequence, 259 residues long: tRNA (guanine-N(7)-)-methyltransferase (259 aa).

The span at 1–11 (MSNTDNSDKNT) shows a compositional bias: basic and acidic residues. A disordered region spans residues 1–29 (MSNTDNSDKNTKPTGYRPPQTDFNTEFGN). S-adenosyl-L-methionine contacts are provided by Glu89, Glu114, Asp141, and Asp164. Asp164 is a catalytic residue. Residues Lys168, Asp200, and 238 to 241 (TKFE) each bind substrate.

It belongs to the class I-like SAM-binding methyltransferase superfamily. TrmB family.

It catalyses the reaction guanosine(46) in tRNA + S-adenosyl-L-methionine = N(7)-methylguanosine(46) in tRNA + S-adenosyl-L-homocysteine. It participates in tRNA modification; N(7)-methylguanine-tRNA biosynthesis. Functionally, catalyzes the formation of N(7)-methylguanine at position 46 (m7G46) in tRNA. This Corynebacterium diphtheriae (strain ATCC 700971 / NCTC 13129 / Biotype gravis) protein is tRNA (guanine-N(7)-)-methyltransferase.